A 494-amino-acid polypeptide reads, in one-letter code: NAD(+) hydrolase ThsA (494 aa).

In terms of domain architecture, Deacetylase sirtuin-type spans 11–295 (ATDKEVLIKE…TILQRYCRSK (285 aa)). Residues Ala-30, Asp-119, and His-157 each coordinate NAD(+). The active-site Proton acceptor is His-157. Positions 296–494 (ILISGSAVEY…KIITALRAGR (199 aa)) are SLOG (STALD) domain, binds 3'cADPR. 3'cADPR contacts are provided by Gly-300, Ser-301, Leu-339, Phe-370, Arg-388, Lys-405, Gly-416, and Glu-420.

It belongs to the soluble Thoeris ThsA family. Homotetramer.

Its subcellular location is the cytoplasm. It catalyses the reaction NAD(+) + H2O = ADP-D-ribose + nicotinamide + H(+). Probably activated by a signal molecule generated by endogenous ThsB1 and/or ThsB2. Can also be activated by the signal generated by ThsB of B.cereus. The activating molecule might be 3' cyclic ADP-D-ribose (3'cADPR). Functionally, probable NAD(+) hydrolyzing component (NADase) of the Thoeris antiviral defense system, composed of ThsA, TIR1 (thsB1) and TIR2 (thsB2). Activated by a signal molecule generated by endogenous TIR1, TIR2 or ThsB from B.cereus. After activation it binds and hydrolyzes NAD(+), leading to cell death and inhibition of phage replication. Expression of Thoeris in B.subtilis (strain BEST7003) confers resistance to phages phi29, phi3T, SPBeta, SBSphi11, SBSphi13, SBSphiJ, SPO1 and SPR but not SBSphiC. The TIR paralogs confer overlapping resistance to different phages. The sequence is that of NAD(+) hydrolase ThsA from Cytobacillus dafuensis (Bacillus dafuensis).